Here is a 137-residue protein sequence, read N- to C-terminus: MNTTVSCELHLRLVVSSESSLPVPAGLRYDTADPYAVHATFHTGAEETVEWVFARDLLAEGLHRPTGTGDVRVWPSRSHGQGVVCIALSSPEGEALLEAPARALESFLKRTDAAVPPGTEHRHFDLDQELSHILAES.

The protein belongs to the SsgA family. As to quaternary structure, interacts with SsgA. Interacts with FtsZ (via N-terminus).

It is found in the cell septum. Functionally, involved in sporulation-specific cell division. Required for early stages of sporulation. Important in the process of growth cessation prior to sporulation-specific cell division. Recruits cell division protein FtsZ to the future septum sites and tethers the contractile ring structure (Z ring) to the cytoplasmic membrane during sporulation. Stimulates polymerization and filament length of FtsZ in vitro. This is Sporulation-specific cell division protein SsgB from Streptomyces coelicolor (strain ATCC BAA-471 / A3(2) / M145).